A 450-amino-acid chain; its full sequence is Protein indeterminate-domain 13 (450 aa).

Ser54 carries the post-translational modification Phosphoserine. 2 C2H2-type zinc fingers span residues 64–86 (FFCE…KRGH) and 106–136 (YICP…SRKH). The Nuclear localization signal signature appears at 128–135 (IKKHFSRK). The C2H2-type 2; degenerate zinc finger occupies 141 to 165 (WKCDKCSKKYAVISDWKAHNKICGS). 8 residues coordinate Zn(2+): Cys143, Cys146, His159, Cys163, Cys170, Cys172, His185, and Cys189. The CCHC-type 2; atypical zinc-finger motif lies at 168-191 (FRCDCGTLFSRKDSFISHRSFCDV). Positions 178–190 (RKDSFISHRSFCD) are SHR-binding. Polar residues predominate over residues 248–263 (FGQKFTNSNPTQQQPN). The interval 248–280 (FGQKFTNSNPTQQQPNALALSSPPSPRSTSDSV) is disordered.

It localises to the nucleus. Probable transcription factor. In Arabidopsis thaliana (Mouse-ear cress), this protein is Protein indeterminate-domain 13.